A 388-amino-acid polypeptide reads, in one-letter code: Succinate--CoA ligase [ADP-forming] subunit beta (388 aa).

Residues 9–244 (KEILRKYNVP…LDEEDANEIE (236 aa)) enclose the ATP-grasp domain. ATP contacts are provided by residues K46, 53–55 (GRG), E99, A102, and E107. Residues N199 and D213 each coordinate Mg(2+). Substrate-binding positions include N264 and 321–323 (GIM).

The protein belongs to the succinate/malate CoA ligase beta subunit family. In terms of assembly, heterotetramer of two alpha and two beta subunits. Mg(2+) serves as cofactor.

The enzyme catalyses succinate + ATP + CoA = succinyl-CoA + ADP + phosphate. It catalyses the reaction GTP + succinate + CoA = succinyl-CoA + GDP + phosphate. It functions in the pathway carbohydrate metabolism; tricarboxylic acid cycle; succinate from succinyl-CoA (ligase route): step 1/1. Succinyl-CoA synthetase functions in the citric acid cycle (TCA), coupling the hydrolysis of succinyl-CoA to the synthesis of either ATP or GTP and thus represents the only step of substrate-level phosphorylation in the TCA. The beta subunit provides nucleotide specificity of the enzyme and binds the substrate succinate, while the binding sites for coenzyme A and phosphate are found in the alpha subunit. In Ralstonia nicotianae (strain ATCC BAA-1114 / GMI1000) (Ralstonia solanacearum), this protein is Succinate--CoA ligase [ADP-forming] subunit beta.